The chain runs to 89 residues: Small ribosomal subunit protein uS17 (89 aa).

The protein belongs to the universal ribosomal protein uS17 family. As to quaternary structure, part of the 30S ribosomal subunit.

One of the primary rRNA binding proteins, it binds specifically to the 5'-end of 16S ribosomal RNA. The polypeptide is Small ribosomal subunit protein uS17 (Leptospira interrogans serogroup Icterohaemorrhagiae serovar Lai (strain 56601)).